A 102-amino-acid chain; its full sequence is Small ribosomal subunit protein uS10 (102 aa).

A disordered region spans residues Pro-37 to Phe-61.

Belongs to the universal ribosomal protein uS10 family. Part of the 30S ribosomal subunit.

Its function is as follows. Involved in the binding of tRNA to the ribosomes. The polypeptide is Small ribosomal subunit protein uS10 (Methanococcus vannielii (strain ATCC 35089 / DSM 1224 / JCM 13029 / OCM 148 / SB)).